The primary structure comprises 107 residues: Flagellar hook-basal body complex protein FliE (107 aa).

Belongs to the FliE family.

The protein localises to the bacterial flagellum basal body. The chain is Flagellar hook-basal body complex protein FliE from Sodalis glossinidius (strain morsitans).